The sequence spans 237 residues: Leucyl/phenylalanyl-tRNA--protein transferase (237 aa).

This sequence belongs to the L/F-transferase family.

It localises to the cytoplasm. The catalysed reaction is N-terminal L-lysyl-[protein] + L-leucyl-tRNA(Leu) = N-terminal L-leucyl-L-lysyl-[protein] + tRNA(Leu) + H(+). It catalyses the reaction N-terminal L-arginyl-[protein] + L-leucyl-tRNA(Leu) = N-terminal L-leucyl-L-arginyl-[protein] + tRNA(Leu) + H(+). The enzyme catalyses L-phenylalanyl-tRNA(Phe) + an N-terminal L-alpha-aminoacyl-[protein] = an N-terminal L-phenylalanyl-L-alpha-aminoacyl-[protein] + tRNA(Phe). Functionally, functions in the N-end rule pathway of protein degradation where it conjugates Leu, Phe and, less efficiently, Met from aminoacyl-tRNAs to the N-termini of proteins containing an N-terminal arginine or lysine. In Photobacterium profundum (strain SS9), this protein is Leucyl/phenylalanyl-tRNA--protein transferase.